A 428-amino-acid polypeptide reads, in one-letter code: Kynureninase (428 aa).

Residues threonine 104, threonine 105, 132–135 (FPSD), aspartate 213, histidine 216, and tyrosine 238 contribute to the pyridoxal 5'-phosphate site. N6-(pyridoxal phosphate)lysine is present on lysine 239. Pyridoxal 5'-phosphate contacts are provided by tryptophan 267 and threonine 295.

Belongs to the kynureninase family. Homodimer. Pyridoxal 5'-phosphate serves as cofactor.

It carries out the reaction L-kynurenine + H2O = anthranilate + L-alanine + H(+). The catalysed reaction is 3-hydroxy-L-kynurenine + H2O = 3-hydroxyanthranilate + L-alanine + H(+). It functions in the pathway amino-acid degradation; L-kynurenine degradation; L-alanine and anthranilate from L-kynurenine: step 1/1. It participates in cofactor biosynthesis; NAD(+) biosynthesis; quinolinate from L-kynurenine: step 2/3. Catalyzes the cleavage of L-kynurenine (L-Kyn) and L-3-hydroxykynurenine (L-3OHKyn) into anthranilic acid (AA) and 3-hydroxyanthranilic acid (3-OHAA), respectively. The chain is Kynureninase from Bacillus mycoides (strain KBAB4) (Bacillus weihenstephanensis).